A 513-amino-acid polypeptide reads, in one-letter code: Probable lipid II flippase MurJ (513 aa).

Transmembrane regions (helical) follow at residues 3-23 (ILKS…LGFM), 25-45 (DLLI…FLAF), 83-103 (FISN…AFGI), 133-153 (IMFP…ILNA), 162-182 (YSSI…TAYF), 186-206 (ILSL…YQFP), 221-241 (ILNL…LGMS), 245-265 (VSII…ISWI), 271-291 (LVEF…LPLL), 313-333 (LVCI…ESLI), 354-374 (IEFY…LAGF), 382-402 (TPMK…IFFI), 405-425 (FQYT…FFLL), 441-461 (WLRF…LLFI), and 481-501 (LFYI…CLGL).

Belongs to the MurJ/MviN family.

The protein localises to the cell inner membrane. It functions in the pathway cell wall biogenesis; peptidoglycan biosynthesis. Its function is as follows. Involved in peptidoglycan biosynthesis. Transports lipid-linked peptidoglycan precursors from the inner to the outer leaflet of the cytoplasmic membrane. This Buchnera aphidicola subsp. Baizongia pistaciae (strain Bp) protein is Probable lipid II flippase MurJ.